We begin with the raw amino-acid sequence, 432 residues long: UPF0761 membrane protein Cag_0935 (432 aa).

6 consecutive transmembrane segments (helical) span residues 52–72 (LLSIVPVLAVVLSVLNLFEVF), 108–128 (NIPLLGSLLLFVIALSLLSTV), 148–168 (FTLYWTVLTLGPLLIVSSLAA), 190–210 (LLALFPFINSIVAFFLLYMLV), 220–240 (AFAGALVASLLLELSKRWFLF), and 254–274 (ALSVVPMLFFWVYLAWVVVLV).

This sequence belongs to the UPF0761 family.

It localises to the cell inner membrane. This Chlorobium chlorochromatii (strain CaD3) protein is UPF0761 membrane protein Cag_0935.